The sequence spans 122 residues: Large ribosomal subunit protein uL14c (122 aa).

Belongs to the universal ribosomal protein uL14 family. In terms of assembly, part of the 50S ribosomal subunit.

The protein resides in the plastid. Its subcellular location is the chloroplast. In terms of biological role, binds to 23S rRNA. The chain is Large ribosomal subunit protein uL14c from Lemna minor (Common duckweed).